Consider the following 151-residue polypeptide: Flagellar assembly factor FliW (151 aa).

It belongs to the FliW family. In terms of assembly, interacts with translational regulator CsrA and flagellin(s).

It localises to the cytoplasm. Functionally, acts as an anti-CsrA protein, binds CsrA and prevents it from repressing translation of its target genes, one of which is flagellin. Binds to flagellin and participates in the assembly of the flagellum. The polypeptide is Flagellar assembly factor FliW (Natranaerobius thermophilus (strain ATCC BAA-1301 / DSM 18059 / JW/NM-WN-LF)).